We begin with the raw amino-acid sequence, 527 residues long: Nucleus accumbens-associated protein 1 (527 aa).

The BTB domain occupies 30-94 (CDVSVVVKGH…CYTGRLSMNV (65 aa)). The interval 131-153 (QGLHAEEAPSSEPQSPVAQTSGW) is disordered. A compositionally biased stretch (polar residues) spans 141 to 152 (SEPQSPVAQTSG). Lysine 167 is covalently cross-linked (Glycyl lysine isopeptide (Lys-Gly) (interchain with G-Cter in SUMO1); alternate). A Glycyl lysine isopeptide (Lys-Gly) (interchain with G-Cter in SUMO2); alternate cross-link involves residue lysine 167. A Glycyl lysine isopeptide (Lys-Gly) (interchain with G-Cter in SUMO2) cross-link involves residue lysine 183. Residue serine 188 is modified to Phosphoserine. Positions 210-292 (DLAANRPHQP…DEEEDGGEEG (83 aa)) are disordered. Residues 225 to 251 (APVVAAAQPAVAAGAGQPAGGVAAAGG) show a composition bias toward low complexity. The segment covering 255–277 (GPSTSERTSPGTSSAYTSDSPGS) has biased composition (polar residues). A Phosphoserine; by PKC modification is found at serine 259. Residues 281–292 (EEDEEEDGGEEG) show a composition bias toward acidic residues. Glycyl lysine isopeptide (Lys-Gly) (interchain with G-Cter in SUMO2) cross-links involve residues lysine 318, lysine 452, lysine 480, lysine 483, and lysine 498. Positions 374–471 (GTNVYITRAQ…DMCTNARRVV (98 aa)) constitute a BEN domain.

Homooligomer; mediated by the BTB domain. Interacts with HDAC3 and HDAC4. Interacts (via BTB domain) with CUL3, PSMD7 and RCOR1. Overexpressed in several types of carcinomas including ovarian serous carcinomas. Expression levels positively correlate with tumor recurrence in ovarian serous carcinomas, and intense immunoreactivity in primary ovarian tumors predicts early recurrence. Up-regulated in ovarian carcinomas after chemotherapy, suggesting a role in development of chemotherapy resistance in ovarian cancer.

The protein resides in the nucleus. Its subcellular location is the cytoplasm. Functionally, functions as a transcriptional repressor. Seems to function as a transcriptional corepressor in neuronal cells through recruitment of HDAC3 and HDAC4. Contributes to tumor progression, and tumor cell proliferation and survival. This may be mediated at least in part through repressing transcriptional activity of GADD45GIP1. Required for recruiting the proteasome from the nucleus to the cytoplasm and dendritic spines. The sequence is that of Nucleus accumbens-associated protein 1 (NACC1) from Homo sapiens (Human).